The following is a 433-amino-acid chain: Glutamate--tRNA ligase 1 (433 aa).

Positions 7 to 17 (PSPTGLIHLGN) match the 'HIGH' region motif. A 'KMSKS' region motif is present at residues 230 to 234 (KMSKR). K233 provides a ligand contact to ATP.

The protein belongs to the class-I aminoacyl-tRNA synthetase family. Glutamate--tRNA ligase type 1 subfamily. As to quaternary structure, monomer.

Its subcellular location is the cytoplasm. The enzyme catalyses tRNA(Glu) + L-glutamate + ATP = L-glutamyl-tRNA(Glu) + AMP + diphosphate. Functionally, catalyzes the attachment of glutamate to tRNA(Glu) in a two-step reaction: glutamate is first activated by ATP to form Glu-AMP and then transferred to the acceptor end of tRNA(Glu). The sequence is that of Glutamate--tRNA ligase 1 from Neorickettsia sennetsu (strain ATCC VR-367 / Miyayama) (Ehrlichia sennetsu).